The sequence spans 168 residues: Fusion protein P6 (168 aa).

Transmembrane regions (helical) follow at residues 29 to 49, 52 to 72, 94 to 114, and 143 to 163; these read IWPLLLIVAIIYFAPYLAGFF, AGFTGIGGIFSSIATTITPTL, FQSLGMGTQLAVVSGAAALIA, and ALPGWIWIAAGGLAVWALWPS.

Interacts with P3.

Its subcellular location is the virion membrane. In terms of biological role, mediates the fusion with the host outer membrane during virus entry into the host cell. The protein is Fusion protein P6 (P6) of Pseudomonas savastanoi pv. phaseolicola (Pseudomonas syringae pv. phaseolicola).